Here is a 252-residue protein sequence, read N- to C-terminus: Imidazole glycerol phosphate synthase subunit HisF (252 aa).

Catalysis depends on residues Asp11 and Asp130.

This sequence belongs to the HisA/HisF family. As to quaternary structure, heterodimer of HisH and HisF.

The protein localises to the cytoplasm. It carries out the reaction 5-[(5-phospho-1-deoxy-D-ribulos-1-ylimino)methylamino]-1-(5-phospho-beta-D-ribosyl)imidazole-4-carboxamide + L-glutamine = D-erythro-1-(imidazol-4-yl)glycerol 3-phosphate + 5-amino-1-(5-phospho-beta-D-ribosyl)imidazole-4-carboxamide + L-glutamate + H(+). It participates in amino-acid biosynthesis; L-histidine biosynthesis; L-histidine from 5-phospho-alpha-D-ribose 1-diphosphate: step 5/9. Its function is as follows. IGPS catalyzes the conversion of PRFAR and glutamine to IGP, AICAR and glutamate. The HisF subunit catalyzes the cyclization activity that produces IGP and AICAR from PRFAR using the ammonia provided by the HisH subunit. In Geobacillus sp. (strain WCH70), this protein is Imidazole glycerol phosphate synthase subunit HisF.